Consider the following 159-residue polypeptide: Probable inactive acireductone dioxygenase 1 (159 aa).

It belongs to the acireductone dioxygenase (ARD) family.

The protein resides in the cytoplasm. It is found in the nucleus. Its function is as follows. Probable inactive acireductone dioxygenase. The chain is Probable inactive acireductone dioxygenase 1 from Caenorhabditis elegans.